The chain runs to 103 residues: MSTLGKAPGALKSVDYEVFGRVQGVCFRMYTEEEARKLGVVGWVKNTSQGTVTGQVQGPEDKVNAMKSWLTKVGSPSSRIDRTNFSNEKEISKLDFSGFSTRY.

At serine 2 the chain carries N-acetylserine. The Acylphosphatase-like domain occupies 13-103 (SVDYEVFGRV…LDFSGFSTRY (91 aa)). Catalysis depends on residues arginine 28 and asparagine 46.

Belongs to the acylphosphatase family.

The catalysed reaction is an acyl phosphate + H2O = a carboxylate + phosphate + H(+). In terms of biological role, its physiological role is not yet clear. The sequence is that of Acylphosphatase-2 (ACYP2) from Anas platyrhynchos (Mallard).